Reading from the N-terminus, the 617-residue chain is Chaperone protein HscA homolog (617 aa).

This sequence belongs to the heat shock protein 70 family.

Probable chaperone. Has a low intrinsic ATPase activity which is markedly stimulated by HscB. This is Chaperone protein HscA homolog from Vibrio vulnificus (strain CMCP6).